Here is a 1100-residue protein sequence, read N- to C-terminus: MAERGGDGGEGERFNPGELRMAQQQALRFRGPAPPPNAVMRGPPPLMRPPPPFGMMRGPPPPPRPPFGRPPFDPNMPPMPPPGGIPPPMGPPHLQRPPFMPPPMGAMPPPPGMMFPPGMPPGTAPGAPALPPTEEIWVENKTPDGKVYYYNARTRESAWTKPDGVKVIQQSELTPMLAAQAQVQAQAQAQAQAQAQAQAQAQAQAQAQAQAQAQAQAQAQAQAQAQAQAQAQAQAQAQAQAQAQAQAQAQAQVQAQAVGAPTPTTSSPAPAVSTSTPTSTPSSTTATTTTATSVAQTVSTPTTQDQTPSSAVSVATPTVSVSAPAPTATPVQTVPQPHPQTLPPAVPHSVPQPAAAIPAFPPVMVPPFRVPLPGMPIPLPGVAMMQIVSCPYVKTVATTKTGVLPGMAPPIVPMIHPQVAIAASPATLAGATAVSEWTEYKTADGKTYYYNNRTLESTWEKPQELKEKEKLDEKIKEPIKEASEEPLPMETEEEDPKEEPVKEIKEEPKEEEMTEEEKAAQKAKPVATTPIPGTPWCVVWTGDERVFFYNPTTRLSMWDRPDDLIGRADVDKIIQEPPHKKGLEDMKKLRHPAPTMLSIQKWQFSMSAIKEEQELMEEMNEDEPIKAKKRKRDDNKDIDSEKEAAMEAEIKAARERAIVPLEARMKQFKDMLLERGVSAFSTWEKELHKIVFDPRYLLLNPKERKQVFDQYVKTRAEEERREKKNKIMQAKEDFKKMMEEAKFNPRATFSEFAAKHAKDSRFKAIEKMKDREALFNEFVAAARKKEKEDSKTRGEKIKSDFFELLSNHHLDSQSRWSKVKDKVESDPRYKAVDSSSMREDLFKQYIEKIAKNLDSEKEKELERQARIEASLREREREVQKARSEQTKEIDREREQHKREEAIQNFKALLSDMVRSSDVSWSDTRRTLRKDHRWESGSLLEREEKEKLFNEHIEALTKKKREHFRQLLDETSAITLTSTWKEVKKIIKEDPRCIKFSSSDRKKQREFEEYIRDKYITAKADFRTLLKETKFITYRSKKLIQESDQHLKDVEKILQNDKRYLVLDCVPEERRKLIVAYVDDLDRRGPPPPPTASEPTRRSTK.

Residues 1–15 show a composition bias toward basic and acidic residues; that stretch reads MAERGGDGGEGERFN. The interval 1–90 is disordered; it reads MAERGGDGGE…PPGGIPPPMG (90 aa). R20 is modified (omega-N-methylarginine). R28, R30, R41, and R48 each carry asymmetric dimethylarginine. A compositionally biased stretch (pro residues) spans 32–90; the sequence is PAPPPNAVMRGPPPLMRPPPPFGMMRGPPPPPRPPFGRPPFDPNMPPMPPPGGIPPPMG. The 34-residue stretch at 131-164 folds into the WW 1 domain; the sequence is PPTEEIWVENKTPDGKVYYYNARTRESAWTKPDG. A coiled-coil region spans residues 184-254; sequence QAQAQAQAQA…AQAQAQAQVQ (71 aa). Disordered stretches follow at residues 258-332 and 461-528; these read VGAP…TPVQ and KPQE…PVAT. Residues 431–464 form the WW 2 domain; it reads ATAVSEWTEYKTADGKTYYYNNRTLESTWEKPQE. Composition is skewed to basic and acidic residues over residues 461 to 483 and 498 to 508; these read KPQE…KEAS and EEPVKEIKEEP. Residues K505 and K509 each participate in a glycyl lysine isopeptide (Lys-Gly) (interchain with G-Cter in SUMO2) cross-link. The region spanning 530-563 is the WW 3 domain; that stretch reads PIPGTPWCVVWTGDERVFFYNPTTRLSMWDRPDD. The stretch at 607–657 forms a coiled coil; it reads SAIKEEQELMEEMNEDEPIKAKKRKRDDNKDIDSEKEAAMEAEIKAARERA. K610 participates in a covalent cross-link: Glycyl lysine isopeptide (Lys-Gly) (interchain with G-Cter in SUMO2). The segment at 616–642 is disordered; it reads MEEMNEDEPIKAKKRKRDDNKDIDSEK. The Nuclear localization signal motif lies at 628–632; sequence KKRKR. Over residues 632-642 the composition is skewed to basic and acidic residues; sequence RDDNKDIDSEK. Position 640 is a phosphoserine (S640). FF domains are found at residues 661–714, 727–781, and 793–848; these read LEAR…YVKT, IMQA…FVAA, and RGEK…YIEK. At S836 the chain carries Phosphoserine. Residues 846-908 are a coiled coil; sequence IEKIAKNLDS…EEAIQNFKAL (63 aa). Residues 872-897 form a disordered region; it reads REREREVQKARSEQTKEIDREREQHK. FF domains are found at residues 898-954, 956-1012, and 1014-1079; these read REEA…HIEA, TKKK…YIRD, and YITA…YVDD. S935 is modified (phosphoserine). The tract at residues 1078–1100 is disordered; that stretch reads DDLDRRGPPPPPTASEPTRRSTK.

Binds RNA polymerase II, HD and SF1. Binds formin. Interacts (via the second WW domain) with TREX1 (via proline-rich region).

The protein resides in the nucleus. Transcription factor that binds RNA polymerase II and inhibits the elongation of transcripts from target promoters. Regulates transcription elongation in a TATA box-dependent manner. This Mus musculus (Mouse) protein is Transcription elongation regulator 1 (Tcerg1).